Here is a 296-residue protein sequence, read N- to C-terminus: UPF0761 membrane protein YE0031 (296 aa).

The next 7 membrane-spanning stretches (helical) occupy residues Leu-44–Phe-64, Ile-67–Ile-87, Gly-108–Trp-128, Leu-136–Ala-156, Leu-185–Val-205, Ala-212–Met-232, and Val-246–Leu-266.

The protein belongs to the UPF0761 family.

Its subcellular location is the cell inner membrane. The sequence is that of UPF0761 membrane protein YE0031 from Yersinia enterocolitica serotype O:8 / biotype 1B (strain NCTC 13174 / 8081).